The sequence spans 851 residues: Nucleolar RNA helicase 2 (851 aa).

Residues 1-260 (MPGKLRSGAK…IPVEQKEGAF (260 aa)) are disordered. Phosphoserine is present on residues Ser-7 and Ser-13. Basic and acidic residues-rich tracts occupy residues 26 to 42 (PSEKKTRKEKTKSKTEE) and 99 to 113 (EPLEKQADSETKEII). An N6-acetyllysine modification is found at Lys-39. A run of 3 repeats spans residues 117–153 (PSEEEADMPKPKKMKKGKEANGDAGEKSPKLKNGLSQ), 154–190 (PSEEEADIPKPKKMKKGKEANGDAGEKSPKLKNGLSQ), and 191–227 (PSEEEVDIPKPKKMKKGKEASGDAGEKSPRLKDGLSQ). The interval 117-227 (PSEEEADMPK…SPRLKDGLSQ (111 aa)) is 3 X 37 AA tandem repeats. The residue at position 118 (Ser-118) is a Phosphoserine. The segment covering 133 to 145 (GKEANGDAGEKSP) has biased composition (basic and acidic residues). N6-acetyllysine is present on Lys-134. Residues Ser-144, Ser-155, Ser-181, Ser-192, Ser-218, Ser-236, Ser-243, Ser-244, and Ser-245 each carry the phosphoserine modification. The span at 170 to 182 (GKEANGDAGEKSP) shows a compositional bias: basic and acidic residues. A compositionally biased stretch (basic and acidic residues) spans 207-223 (GKEASGDAGEKSPRLKD). The span at 226–237 (SQPSEPKSNSSD) shows a compositional bias: polar residues. Over residues 246–257 (ETEKEIPVEQKE) the composition is skewed to basic and acidic residues. The short motif at 258–286 (GAFSNFPISEETVKLLKARGVNFLFPIQA) is the Q motif element. The Helicase ATP-binding domain occupies 289–468 (FHHVYSGKDL…KKYMKSTYEQ (180 aa)). Residue 302–309 (ARTGTGKT) participates in ATP binding. The residue at position 368 (Thr-368) is a Phosphothreonine. The DEAD box motif lies at 411–414 (DEVD). A Helicase C-terminal domain is found at 501–645 (DVIRVYSGHQ…GVPSATEIIK (145 aa)). Ser-639 is modified (phosphoserine). Lys-672 bears the N6-acetyllysine mark. Residues 783-851 (QPELEGPPDG…KRSFSKAFGQ (69 aa)) form a disordered region. Tandem repeats lie at residues 807–811 (FRGQR), 817–823 (FRGQGQR), and 829–833 (FRGQR). The 3 X 5 AA repeats stretch occupies residues 807–833 (FRGQRGGSRNFRGQGQRGGSRNFRGQR). Residue Lys-847 is modified to N6-acetyllysine.

Belongs to the DEAD box helicase family. DDX21/DDX50 subfamily. In terms of assembly, homodimer; homodimerizes via its N-terminus. Found in a multi-helicase-TICAM1 complex at least composed of DHX36, DDX1, DDX21 and TICAM1; this complex exists in resting cells with or without poly(I:C) RNA ligand stimulation. Interacts (via C-terminus) with TICAM1 (via TIR domain). Interacts with DHX36 (via C-terminus); this interaction serves as bridges to TICAM1. Interacts (via C-terminus) with DDX1 (via B30.2/SPRY domain); this interaction serves as bridges to TICAM1. Component of the B-WICH complex, at least composed of SMARCA5/SNF2H, BAZ1B/WSTF, SF3B1, DEK, MYO1C, ERCC6, MYBBP1A and DDX21. Interacts with C1QBP. Interacts with JUN. Interacts with WDR46. Interacts with MCM3AP. Interacts with WDR43. Interacts with KPNA3. Interacts with GID4. Acetylation by CREBBP/CBP inhibits the helicase activity. Deacetylation by SIRT7 promotes the helicase activity and overcomes R-loop-mediated stalling of RNA polymerases. Highly expressed in liver and testis. Expressed at lower level in brain, lungs, and skeletal muscle.

The protein localises to the nucleus. The protein resides in the nucleolus. It localises to the nucleoplasm. It is found in the cytoplasm. Its subcellular location is the cytosol. The protein localises to the mitochondrion. The catalysed reaction is ATP + H2O = ADP + phosphate + H(+). Its activity is regulated as follows. Acetylation inhibits the helicase activity. In terms of biological role, RNA helicase that acts as a sensor of the transcriptional status of both RNA polymerase (Pol) I and II: promotes ribosomal RNA (rRNA) processing and transcription from polymerase II (Pol II). Binds various RNAs, such as rRNAs, snoRNAs, 7SK and, at lower extent, mRNAs. In the nucleolus, localizes to rDNA locus, where it directly binds rRNAs and snoRNAs, and promotes rRNA transcription, processing and modification. Required for rRNA 2'-O-methylation, possibly by promoting the recruitment of late-acting snoRNAs SNORD56 and SNORD58 with pre-ribosomal complexes. In the nucleoplasm, binds 7SK RNA and is recruited to the promoters of Pol II-transcribed genes: acts by facilitating the release of P-TEFb from inhibitory 7SK snRNP in a manner that is dependent on its helicase activity, thereby promoting transcription of its target genes. Functions as cofactor for JUN-activated transcription: required for phosphorylation of JUN at 'Ser-77'. Can unwind double-stranded RNA (helicase) and can fold or introduce a secondary structure to a single-stranded RNA (foldase). Together with SIRT7, required to prevent R-loop-associated DNA damage and transcription-associated genomic instability: deacetylation by SIRT7 activates the helicase activity, thereby overcoming R-loop-mediated stalling of RNA polymerases. Involved in rRNA processing. May bind to specific miRNA hairpins. Component of a multi-helicase-TICAM1 complex that acts as a cytoplasmic sensor of viral double-stranded RNA (dsRNA) and plays a role in the activation of a cascade of antiviral responses including the induction of pro-inflammatory cytokines via the adapter molecule TICAM1. The sequence is that of Nucleolar RNA helicase 2 (Ddx21) from Mus musculus (Mouse).